Consider the following 265-residue polypeptide: Hydroxyethylthiazole kinase (265 aa).

M43 contributes to the substrate binding site. ATP contacts are provided by R119 and S165. A192 contributes to the substrate binding site.

This sequence belongs to the Thz kinase family. Mg(2+) is required as a cofactor.

It carries out the reaction 5-(2-hydroxyethyl)-4-methylthiazole + ATP = 4-methyl-5-(2-phosphooxyethyl)-thiazole + ADP + H(+). The protein operates within cofactor biosynthesis; thiamine diphosphate biosynthesis; 4-methyl-5-(2-phosphoethyl)-thiazole from 5-(2-hydroxyethyl)-4-methylthiazole: step 1/1. In terms of biological role, catalyzes the phosphorylation of the hydroxyl group of 4-methyl-5-beta-hydroxyethylthiazole (THZ). The sequence is that of Hydroxyethylthiazole kinase from Haemophilus influenzae (strain ATCC 51907 / DSM 11121 / KW20 / Rd).